Here is a 184-residue protein sequence, read N- to C-terminus: UPF0149 protein Pmen_0324 (184 aa).

It belongs to the UPF0149 family.

In Ectopseudomonas mendocina (strain ymp) (Pseudomonas mendocina), this protein is UPF0149 protein Pmen_0324.